Here is a 398-residue protein sequence, read N- to C-terminus: S-adenosylmethionine synthase (398 aa).

Residue His16 participates in ATP binding. Residue Asp18 coordinates Mg(2+). Glu51 is a K(+) binding site. L-methionine contacts are provided by Glu64 and Gln108. The tract at residues 108–118 (QSADIAQGVDA) is flexible loop. ATP contacts are provided by residues 176-178 (DSK), 242-243 (KF), Asp251, 257-258 (RK), Ala274, and Lys278. An L-methionine-binding site is contributed by Asp251. Residue Lys282 participates in L-methionine binding.

The protein belongs to the AdoMet synthase family. In terms of assembly, homotetramer; dimer of dimers. Mg(2+) is required as a cofactor. Requires K(+) as cofactor.

It localises to the cytoplasm. It catalyses the reaction L-methionine + ATP + H2O = S-adenosyl-L-methionine + phosphate + diphosphate. The protein operates within amino-acid biosynthesis; S-adenosyl-L-methionine biosynthesis; S-adenosyl-L-methionine from L-methionine: step 1/1. Catalyzes the formation of S-adenosylmethionine (AdoMet) from methionine and ATP. The overall synthetic reaction is composed of two sequential steps, AdoMet formation and the subsequent tripolyphosphate hydrolysis which occurs prior to release of AdoMet from the enzyme. This chain is S-adenosylmethionine synthase, found in Rhodopseudomonas palustris (strain HaA2).